The primary structure comprises 77 residues: Conotoxin King-Kong 2 (77 aa).

Positions 1–22 are cleaved as a signal peptide; it reads MKLTCMMIVAVLFLTAWTFVTA. A propeptide spanning residues 23 to 49 is cleaved from the precursor; the sequence is DDSGNGLENLFSKAHHEMKNPEASNLN. Cystine bridges form between Cys-52–Cys-67, Cys-59–Cys-71, and Cys-66–Cys-76. At Cys-76 the chain carries Cysteine amide.

It belongs to the conotoxin O1 superfamily. Expressed by the venom duct.

The protein localises to the secreted. The sequence is that of Conotoxin King-Kong 2 from Conus textile (Cloth-of-gold cone).